Consider the following 90-residue polypeptide: Phosphocarrier protein NPr (90 aa).

Residues 2-90 (TVKQTVEITN…ALFNSGFDED (89 aa)) enclose the HPr domain. Histidine 16 serves as the catalytic Pros-phosphohistidine intermediate.

The protein belongs to the HPr family.

The protein localises to the cytoplasm. Functionally, component of the phosphoenolpyruvate-dependent nitrogen-metabolic phosphotransferase system (nitrogen-metabolic PTS), that seems to be involved in regulating nitrogen metabolism. The phosphoryl group from phosphoenolpyruvate (PEP) is transferred to the phosphoryl carrier protein NPr by enzyme I-Ntr. Phospho-NPr then transfers it to EIIA-Ntr. Could function in the transcriptional regulation of sigma-54 dependent operons in conjunction with the NPr (PtsO) and EIIA-Ntr (PtsN) proteins. This is Phosphocarrier protein NPr (ptsO) from Escherichia coli O157:H7.